The primary structure comprises 157 residues: Small ribosomal subunit protein uS7 (157 aa).

The protein belongs to the universal ribosomal protein uS7 family. In terms of assembly, part of the 30S ribosomal subunit. Contacts proteins S9 and S11.

One of the primary rRNA binding proteins, it binds directly to 16S rRNA where it nucleates assembly of the head domain of the 30S subunit. Is located at the subunit interface close to the decoding center, probably blocks exit of the E-site tRNA. This is Small ribosomal subunit protein uS7 from Roseiflexus castenholzii (strain DSM 13941 / HLO8).